We begin with the raw amino-acid sequence, 609 residues long: UvrABC system protein C (609 aa).

The 78-residue stretch at 15–92 (TGSGVYQMQD…IKQFRPRYNV (78 aa)) folds into the GIY-YIG domain. The UVR domain maps to 202–237 (DQVIIKLTERMEVASENLVFEEAAHYRDQIRQLRRL).

The protein belongs to the UvrC family. In terms of assembly, interacts with UvrB in an incision complex.

Its subcellular location is the cytoplasm. The UvrABC repair system catalyzes the recognition and processing of DNA lesions. UvrC both incises the 5' and 3' sides of the lesion. The N-terminal half is responsible for the 3' incision and the C-terminal half is responsible for the 5' incision. This chain is UvrABC system protein C, found in Coxiella burnetii (strain CbuK_Q154) (Coxiella burnetii (strain Q154)).